The sequence spans 187 residues: Large ribosomal subunit protein uL22 (187 aa).

Belongs to the universal ribosomal protein uL22 family.

This is Large ribosomal subunit protein uL22 (RPL17) from Theileria annulata.